Consider the following 384-residue polypeptide: Probable circularly permuted 1,3-beta-glucanase PGA52 (384 aa).

An N-terminal signal peptide occupies residues 1-17; it reads MLFSSLLVSTLVSVATA. N-linked (GlcNAc...) asparagine glycans are attached at residues Asn118, Asn128, Asn170, Asn210, and Asn244. The ExDxxE motif signature appears at 254–259; that stretch reads EFDIFE. Residues Asn262 and Asn318 are each glycosylated (N-linked (GlcNAc...) asparagine). Ser361 carries GPI-anchor amidated serine lipidation. Residues 362–384 constitute a propeptide, removed in mature form; it reads GGVSYQPSFITNLLMTVLTLWVI.

This sequence belongs to the PGA52 family.

The protein resides in the cell membrane. The enzyme catalyses Hydrolysis of (1-&gt;3)-beta-D-glucosidic linkages in (1-&gt;3)-beta-D-glucans.. Probable circularly permuted 1,3-beta-glucanase involved in cell wall modification through beta-1,3-glucan network alterations such as increased branching or remodeling. In Candida albicans (strain SC5314 / ATCC MYA-2876) (Yeast), this protein is Probable circularly permuted 1,3-beta-glucanase PGA52 (PGA52).